The chain runs to 142 residues: Serine/threonine-protein kinase BtrW (142 aa).

It belongs to the anti-sigma-factor family. As to quaternary structure, probably able to multimerize; interacts with BtrV.

It catalyses the reaction L-seryl-[protein] + ATP = O-phospho-L-seryl-[protein] + ADP + H(+). The enzyme catalyses L-threonyl-[protein] + ATP = O-phospho-L-threonyl-[protein] + ADP + H(+). Possible negative regulator of sigma-B activity. Phosphorylates and inactivates its specific antagonist protein, BtrV. Upon phosphorylation of BtrV, BtrW is released and binds to an unknown partner(s) that might be sigma-B, thereby blocking its ability to form a complex with its partner (possibly an RNA polymerase holoenzyme (E-sigma-B)). Involved in type III secretion system (T3SS). Phosphorylates BtrV. The chain is Serine/threonine-protein kinase BtrW (btrW) from Bordetella bronchiseptica (strain ATCC BAA-588 / NCTC 13252 / RB50) (Alcaligenes bronchisepticus).